The primary structure comprises 772 residues: MSFVVGFDFGTKNCTIAVAQKGGVDVIANEVSNRLTPSMVSFGEKERYLGESALTNQLRNIRNTITNIKRFIGQEFKTDTVQEELKHEMFQSYEMDNGFVGYNVTYAGEQCSFSSEAILGMLFGKLKKTTEAFVNNPVRDVVISVPVFWNDYQRRAILNAGSIAGLNIIRLINETTATALSYGIYKEWSETDPTNVLFVDVGDSATSVSAVQYKKGQLKVLGTASNPNIGSRVFDETLVKHFAKEFQTKYKINVFENKKALIRLRQACEKVKKILSSNNEAPVSIDSLMDDKDVKGMIDRATFEELANDDMNTIVEPLQRLLSELQMTPDQFQSIEITGGGTRSTSLQKKLSEVLGRDLSKTINSEESVCRGAALQCAMLSPVFRVRPFAVNDVASYPVSVHFKSVSGVEQKLDLFNLKSAIPTPKPLRISFPVTKAEGFEIVVNSTFGTIATVKVDNIPAFTNKSSIKAKVWLDIHGIFHIDEVKLVEQIPEEETAAPAETPAETPANGEAAKPAEEKKVKVKETSLVFTTSRKGLTNELLKAAIEEEGRMQASDLLAIETAEKKNALESYIYDMRSKLQSSLKEYVTPADAETFMTQLNKQMDWLESEEGEDQTKSVYAGKLEELRRLGNPIQKRKQDLEDYPDAVQTLKNIASYVKNEAMIPGERYDHIEKEEKEKLCKDCDDAVEWIDALVAKQQATPKTQPCIINTTEVLAKKTQLEVTAKMILGKPKPKPVEVPKEEPKDTPMESKDAPAEEPVATKDQKMDDILD.

Disordered stretches follow at residues 496 to 519 (TAAP…AEEK) and 729 to 772 (LGKP…DILD). Residues 497–513 (AAPAETPAETPANGEAA) are compositionally biased toward low complexity. The span at 735 to 772 (KPVEVPKEEPKDTPMESKDAPAEEPVATKDQKMDDILD) shows a compositional bias: basic and acidic residues.

It belongs to the heat shock protein 70 family.

Functionally, may function in protein folding and assembly, and disassembly of protein complexes. The polypeptide is Heat shock protein 88 (hspH) (Dictyostelium discoideum (Social amoeba)).